Here is a 230-residue protein sequence, read N- to C-terminus: Claudin-2 (230 aa).

Residues 1 to 7 are Cytoplasmic-facing; the sequence is MASLGLQ. A helical membrane pass occupies residues 8–28; it reads LVGYILGLLGLLGTLVAMLLP. Residues 29 to 81 lie on the Extracellular side of the membrane; sequence SWKTSSYVGASIVTAVGFSKGLWMECATHSTGITQCDIYSTLLGLPADIQAAQ. Cys54 and Cys64 are oxidised to a cystine. A helical membrane pass occupies residues 82–102; sequence AMMVTSSAISSLACIISVVGM. Residues 103-116 are Cytoplasmic-facing; that stretch reads RCTVFCQESRAKDR. The helical transmembrane segment at 117–137 threads the bilayer; the sequence is VAVAGGVFFILGGLLGFIPVA. At 138–162 the chain is on the extracellular side; it reads WNLHGILRDFYSPLVPDSMKFEIGE. The helical transmembrane segment at 163–183 threads the bilayer; the sequence is ALYLGIISSLFSLIAGIILCF. The Cytoplasmic segment spans residues 184–230; sequence SCSSQRNRSNYYDAYQAQPLATRSSPRPGQPPKVKSEFNSYSLTGYV. Residues 205–230 are disordered; it reads TRSSPRPGQPPKVKSEFNSYSLTGYV. Lys218 is covalently cross-linked (Glycyl lysine isopeptide (Lys-Gly) (interchain with G-Cter in SUMO)). Ser219 and Ser223 each carry phosphoserine. Positions 220-230 are enriched in polar residues; that stretch reads EFNSYSLTGYV. Residues 229 to 230 are interactions with TJP1, TJP2 and TJP3; sequence YV.

It belongs to the claudin family. As to quaternary structure, can form homo- and heteropolymers with other claudins to mediate paracellular barrier and channel functions of tight junctions in response to physiological stimuli. Homopolymers interact with CLDN3, but not CLDN1, homopolymers. Directly interacts with TJP1/ZO-1, TJP2/ZO-2 and TJP3/ZO-3. Post-translationally, the disulfide bond is necessary for pore formation, but is not required for correct protein trafficking.

The protein resides in the cell junction. It localises to the tight junction. It is found in the cell membrane. It carries out the reaction Na(+)(in) = Na(+)(out). The catalysed reaction is K(+)(in) = K(+)(out). The enzyme catalyses Rb(+)(in) = Rb(+)(out). It catalyses the reaction Li(+)(in) = Li(+)(out). It carries out the reaction Cs(+)(in) = Cs(+)(out). The catalysed reaction is Ca(2+)(in) = Ca(2+)(out). The enzyme catalyses methylamine(out) = methylamine(in). It catalyses the reaction choline(out) = choline(in). It carries out the reaction H2O(in) = H2O(out). Forms paracellular channels: polymerizes in tight junction strands with cation- and water-selective channels through the strands, conveying epithelial permeability in a process known as paracellular tight junction permeability. In intestinal epithelium, allows for sodium and water fluxes from the peritoneal side to the lumen of the intestine to regulate nutrient absorption and clear enteric pathogens as part of mucosal immune response. In kidney, allows passive sodium and calcium reabsorption across proximal tubules from the lumen back to the bloodstream. In the hepatobiliary tract, allows paracellular water and cation fluxes in the hepatic perivenous areas and biliary epithelium to generate bile flow and maintain osmotic gradients. This is Claudin-2 from Homo sapiens (Human).